We begin with the raw amino-acid sequence, 461 residues long: FAD-dependent monooxygenase nodY2 (461 aa).

2 residues coordinate FAD: glutamate 48 and arginine 136. Arginine 214 is a catalytic residue. Positions 338 and 351 each coordinate FAD.

The protein belongs to the paxM FAD-dependent monooxygenase family. FAD is required as a cofactor.

The protein operates within secondary metabolite biosynthesis. FAD-dependent monooxygenase; part of the gene cluster that mediates the biosynthesis of the indole diterpenes nodulisporic acids (NA). Nodulisporic acid A (NAA) and its chemically modified derivatives are of particular significance because of their highly potent insecticidal activity against blood-feeding arthropods and lack of observable adverse effects on mammals, in particular the tremogenicity associated with the paspaline-derived IDTs is not observed. The geranylgeranyl diphosphate (GGPP) synthase ggs1, localized outside of the cluster, is proposed to catalyze the first step in nodulisporic acid biosynthesis via conversion of farnesyl pyrophosphate and isopentyl pyrophosphate into geranylgeranyl pyrophosphate (GGPP). Condensation of indole-3-glycerol phosphate with GGPP by the prenyl transferase nodC then forms 3-geranylgeranylindole (3-GGI). Epoxidation by the FAD-dependent monooxygenase nodM leads to a single-epoxidized-GGI that is substrate of the terpene cyclase nodB for cyclization to yield emindole SB. The terminal methyl carbon, C28, of emindole SB is then oxidized by the cytochrome P450 monooxygenase nodW to produce nodulisporic acid F (NAF), the pentacyclic core of NAA. NAF is converted to nodulisporic acid E (NAE) via prenylation. This step is probably performed by one of the indole diterpene prenyltransferases nodD1 or nodD2. Several oxidation steps performed by the FAD-linked oxidoreductase nodO and one of the cytochrome P450 monooxygenase nodR, nodX or nodZ further convert NAE to nodulisporic acid D (NAD). NAD is substrate of cytochrome P450 monooxygenase nodJ to produce the precursor of nodulisporic acid C (NAC), converted to NAC by one of the indole diterpene prenyltransferases nodD1 or nodD2. The FAD-dependent monooxygenase nodY2 then oxidizes NAC to nodulisporic acid B (NAB). Finally NAB is converted to NAA by one of the cytochrome P450 monooxygenases nodR, nodX or nodZ. The sequence is that of FAD-dependent monooxygenase nodY2 from Hypoxylon pulicicidum.